The following is a 445-amino-acid chain: Neuropeptide Y receptor type 5 (445 aa).

The Extracellular segment spans residues 1–42 (MEFKLEEHFNKTFVTENNTAAARNAAFPAWEDYRGSVDDLQY). N-linked (GlcNAc...) asparagine glycosylation is found at N10 and N17. Residues 43–63 (FLIGLYTFVSLLGFMGNLLIL) traverse the membrane as a helical segment. Topologically, residues 64–77 (MAVMKKRNQKTTVN) are cytoplasmic. Residues 78–98 (FLIGNLAFSDILVVLFCSPFT) form a helical membrane-spanning segment. The Extracellular segment spans residues 99 to 117 (LTSVLLDQWMFGKAMCHIM). C114 and C198 are oxidised to a cystine. The chain crosses the membrane as a helical span at residues 118–138 (PFLQCVSVLVSTLILISIAIV). At 139–156 (RYHMIKHPISNNLTANHG) the chain is on the cytoplasmic side. The helical transmembrane segment at 157-177 (YFLIATVWTLGFAICSPLPVF) threads the bilayer. At 178-208 (HSLVELKETFGSALLSSKYLCVESWPSDSYR) the chain is on the extracellular side. A helical transmembrane segment spans residues 209 to 229 (IAFTISLLLVQYILPLVCLTV). At 230–368 (SHTSVCRSIS…KKRSRSVFYR (139 aa)) the chain is on the cytoplasmic side. A helical membrane pass occupies residues 369–389 (LTILILVFAVSWMPLHVFHVV). Over 390-406 (TDFNDNLISNRHFKLVY) the chain is Extracellular. A helical transmembrane segment spans residues 407–427 (CICHLLGMMSCCLNPILYGFL). At 428-445 (NNGIKADLRALIHCLHMS) the chain is on the cytoplasmic side. C441 carries S-palmitoyl cysteine lipidation.

This sequence belongs to the G-protein coupled receptor 1 family. In terms of tissue distribution, brain; hypothalamus.

It is found in the cell membrane. Functionally, receptor for neuropeptide Y and peptide YY. The activity of this receptor is mediated by G proteins that inhibit adenylate cyclase activity. Seems to be associated with food intake. Could be involved in feeding disorders. This Rattus norvegicus (Rat) protein is Neuropeptide Y receptor type 5 (Npy5r).